The sequence spans 88 residues: Small ribosomal subunit protein bS20 (88 aa).

Belongs to the bacterial ribosomal protein bS20 family. Part of the 30S ribosomal subunit.

In terms of biological role, binds directly to 16S ribosomal RNA. The chain is Small ribosomal subunit protein bS20 (rpsT) from Bacillus subtilis (strain 168).